Consider the following 254-residue polypeptide: Aspartate/glutamate leucyltransferase (254 aa).

Belongs to the R-transferase family. Bpt subfamily.

The protein localises to the cytoplasm. The catalysed reaction is N-terminal L-glutamyl-[protein] + L-leucyl-tRNA(Leu) = N-terminal L-leucyl-L-glutamyl-[protein] + tRNA(Leu) + H(+). It catalyses the reaction N-terminal L-aspartyl-[protein] + L-leucyl-tRNA(Leu) = N-terminal L-leucyl-L-aspartyl-[protein] + tRNA(Leu) + H(+). Functionally, functions in the N-end rule pathway of protein degradation where it conjugates Leu from its aminoacyl-tRNA to the N-termini of proteins containing an N-terminal aspartate or glutamate. The protein is Aspartate/glutamate leucyltransferase of Maricaulis maris (strain MCS10) (Caulobacter maris).